Here is a 320-residue protein sequence, read N- to C-terminus: Malate dehydrogenase (320 aa).

Residues 10 to 15 and Asp-34 contribute to the NAD(+) site; that span reads GAGNIG. Substrate is bound by residues Arg-83 and Arg-89. NAD(+) contacts are provided by residues Asn-96 and 119–121; that span reads ITN. Positions 121 and 152 each coordinate substrate. The active-site Proton acceptor is the His-176.

This sequence belongs to the LDH/MDH superfamily. MDH type 3 family.

It carries out the reaction (S)-malate + NAD(+) = oxaloacetate + NADH + H(+). In terms of biological role, catalyzes the reversible oxidation of malate to oxaloacetate. The chain is Malate dehydrogenase from Novosphingobium aromaticivorans (strain ATCC 700278 / DSM 12444 / CCUG 56034 / CIP 105152 / NBRC 16084 / F199).